Here is a 342-residue protein sequence, read N- to C-terminus: Ketol-acid reductoisomerase (NADP(+)) (342 aa).

Residues 2 to 181 (VKVYYNGDIK…GGARAGVLET (180 aa)) form the KARI N-terminal Rossmann domain. NADP(+)-binding positions include 25–28 (YGSQ), R48, S52, and 82–85 (DEQQ). Residue H107 is part of the active site. G133 is a binding site for NADP(+). Positions 182-327 (TFKEETETDL…RQLREMMPFV (146 aa)) constitute a KARI C-terminal knotted domain. The Mg(2+) site is built by D190, E194, E226, and E230. Residue S251 participates in substrate binding.

The protein belongs to the ketol-acid reductoisomerase family. Mg(2+) is required as a cofactor.

The enzyme catalyses (2R)-2,3-dihydroxy-3-methylbutanoate + NADP(+) = (2S)-2-acetolactate + NADPH + H(+). It carries out the reaction (2R,3R)-2,3-dihydroxy-3-methylpentanoate + NADP(+) = (S)-2-ethyl-2-hydroxy-3-oxobutanoate + NADPH + H(+). It participates in amino-acid biosynthesis; L-isoleucine biosynthesis; L-isoleucine from 2-oxobutanoate: step 2/4. The protein operates within amino-acid biosynthesis; L-valine biosynthesis; L-valine from pyruvate: step 2/4. Functionally, involved in the biosynthesis of branched-chain amino acids (BCAA). Catalyzes an alkyl-migration followed by a ketol-acid reduction of (S)-2-acetolactate (S2AL) to yield (R)-2,3-dihydroxy-isovalerate. In the isomerase reaction, S2AL is rearranged via a Mg-dependent methyl migration to produce 3-hydroxy-3-methyl-2-ketobutyrate (HMKB). In the reductase reaction, this 2-ketoacid undergoes a metal-dependent reduction by NADPH to yield (R)-2,3-dihydroxy-isovalerate. This chain is Ketol-acid reductoisomerase (NADP(+)), found in Bacillus velezensis (strain DSM 23117 / BGSC 10A6 / LMG 26770 / FZB42) (Bacillus amyloliquefaciens subsp. plantarum).